A 292-amino-acid polypeptide reads, in one-letter code: Bifunctional protein FolD (292 aa).

NADP(+)-binding positions include 171 to 173 (GAS), Ile196, and Ile237.

The protein belongs to the tetrahydrofolate dehydrogenase/cyclohydrolase family. As to quaternary structure, homodimer.

The catalysed reaction is (6R)-5,10-methylene-5,6,7,8-tetrahydrofolate + NADP(+) = (6R)-5,10-methenyltetrahydrofolate + NADPH. It carries out the reaction (6R)-5,10-methenyltetrahydrofolate + H2O = (6R)-10-formyltetrahydrofolate + H(+). It functions in the pathway one-carbon metabolism; tetrahydrofolate interconversion. In terms of biological role, catalyzes the oxidation of 5,10-methylenetetrahydrofolate to 5,10-methenyltetrahydrofolate and then the hydrolysis of 5,10-methenyltetrahydrofolate to 10-formyltetrahydrofolate. This chain is Bifunctional protein FolD, found in Helicobacter acinonychis (strain Sheeba).